A 252-amino-acid polypeptide reads, in one-letter code: Coenzyme F420:L-glutamate ligase (252 aa).

GTP is bound by residues 11–14, 45–46, and K50; these read MPLV and ET. D115 is a binding site for a divalent metal cation. N118 contributes to the GTP binding site. 3 residues coordinate a divalent metal cation: D156, T157, and Q214. Residue 212-219 participates in GTP binding; that stretch reads MGQADEGV.

The protein belongs to the CofE family. In terms of assembly, homodimer. Requires Mg(2+) as cofactor. Mn(2+) is required as a cofactor. The cofactor is K(+).

The catalysed reaction is oxidized coenzyme F420-0 + GTP + L-glutamate = oxidized coenzyme F420-1 + GDP + phosphate + H(+). It carries out the reaction oxidized coenzyme F420-1 + GTP + L-glutamate = oxidized coenzyme F420-2 + GDP + phosphate + H(+). It functions in the pathway cofactor biosynthesis; coenzyme F420 biosynthesis. Functionally, catalyzes the GTP-dependent successive addition of two or more gamma-linked L-glutamates to the L-lactyl phosphodiester of 7,8-didemethyl-8-hydroxy-5-deazariboflavin (F420-0) to form coenzyme F420-0-glutamyl-glutamate (F420-2) or polyglutamated F420 derivatives. The sequence is that of Coenzyme F420:L-glutamate ligase from Methanothermobacter thermautotrophicus (strain ATCC 29096 / DSM 1053 / JCM 10044 / NBRC 100330 / Delta H) (Methanobacterium thermoautotrophicum).